Here is a 261-residue protein sequence, read N- to C-terminus: Putative methyltransferase MJ0046 (261 aa).

The protein belongs to the methyltransferase superfamily.

In Methanocaldococcus jannaschii (strain ATCC 43067 / DSM 2661 / JAL-1 / JCM 10045 / NBRC 100440) (Methanococcus jannaschii), this protein is Putative methyltransferase MJ0046.